The primary structure comprises 177 residues: Large ribosomal subunit protein uL6 (177 aa).

The protein belongs to the universal ribosomal protein uL6 family. Part of the 50S ribosomal subunit.

In terms of biological role, this protein binds to the 23S rRNA, and is important in its secondary structure. It is located near the subunit interface in the base of the L7/L12 stalk, and near the tRNA binding site of the peptidyltransferase center. The sequence is that of Large ribosomal subunit protein uL6 from Rhizobium meliloti (strain 1021) (Ensifer meliloti).